Consider the following 372-residue polypeptide: Dual-specificity RNA methyltransferase RlmN (372 aa).

E94 serves as the catalytic Proton acceptor. The 240-residue stretch at 100–339 folds into the Radical SAM core domain; the sequence is DGDRATLCVS…VTIRKTRGDD (240 aa). An intrachain disulfide couples C107 to C344. 3 residues coordinate [4Fe-4S] cluster: C114, C118, and C121. Residues 168–169, S200, 222–224, and N301 each bind S-adenosyl-L-methionine; these read GE and SLH. The active-site S-methylcysteine intermediate is C344.

The protein belongs to the radical SAM superfamily. RlmN family. Requires [4Fe-4S] cluster as cofactor.

Its subcellular location is the cytoplasm. It carries out the reaction adenosine(2503) in 23S rRNA + 2 reduced [2Fe-2S]-[ferredoxin] + 2 S-adenosyl-L-methionine = 2-methyladenosine(2503) in 23S rRNA + 5'-deoxyadenosine + L-methionine + 2 oxidized [2Fe-2S]-[ferredoxin] + S-adenosyl-L-homocysteine. It catalyses the reaction adenosine(37) in tRNA + 2 reduced [2Fe-2S]-[ferredoxin] + 2 S-adenosyl-L-methionine = 2-methyladenosine(37) in tRNA + 5'-deoxyadenosine + L-methionine + 2 oxidized [2Fe-2S]-[ferredoxin] + S-adenosyl-L-homocysteine. Functionally, specifically methylates position 2 of adenine 2503 in 23S rRNA and position 2 of adenine 37 in tRNAs. m2A2503 modification seems to play a crucial role in the proofreading step occurring at the peptidyl transferase center and thus would serve to optimize ribosomal fidelity. The sequence is that of Dual-specificity RNA methyltransferase RlmN from Aliivibrio fischeri (strain ATCC 700601 / ES114) (Vibrio fischeri).